Consider the following 238-residue polypeptide: Uridylate kinase (238 aa).

An ATP-binding site is contributed by 12 to 15 (KLSG). Gly54 lines the UMP pocket. ATP contacts are provided by Gly55 and Arg59. UMP-binding positions include Asp74 and 135–142 (TGNPFFTT). Residues Thr162, Tyr168, and Asp171 each contribute to the ATP site.

It belongs to the UMP kinase family. In terms of assembly, homohexamer.

It localises to the cytoplasm. The catalysed reaction is UMP + ATP = UDP + ADP. The protein operates within pyrimidine metabolism; CTP biosynthesis via de novo pathway; UDP from UMP (UMPK route): step 1/1. Inhibited by UTP. Its function is as follows. Catalyzes the reversible phosphorylation of UMP to UDP. This is Uridylate kinase from Methylobacillus flagellatus (strain ATCC 51484 / DSM 6875 / VKM B-1610 / KT).